A 178-amino-acid polypeptide reads, in one-letter code: Single-stranded DNA-binding protein 2 (178 aa).

The SSB domain maps to 6-111 (VNKVILVGNL…VVVSQSGTMQ (106 aa)). Residues 55–61 (WHRVVLY) mediate DNA binding. The disordered stretch occupies residues 111–161 (QMLGGRNSAGSGQQQGGWGQPQQPAAPSHSGMPPQQHPANEPPMDFDDDIP).

As to quaternary structure, homotetramer.

The polypeptide is Single-stranded DNA-binding protein 2 (ssb2) (Salmonella typhi).